A 238-amino-acid chain; its full sequence is Membrane protein 2 (238 aa).

This sequence belongs to the varicellovirus ORF2 protein family. In terms of processing, phosphorylated by host.

The protein resides in the host membrane. The protein is Membrane protein 2 of Varicella-zoster virus (strain Dumas) (HHV-3).